A 288-amino-acid chain; its full sequence is uncharacterized protein (288 aa).

Disordered stretches follow at residues 31-52 (KAVD…EAPS) and 179-288 (YPSK…VELK). Residues 206–217 (RPSSPTNFSKLI) show a composition bias toward polar residues. A compositionally biased stretch (basic and acidic residues) spans 221 to 236 (YKDEWLQQQADSDKRA). 2 stretches are compositionally biased toward low complexity: residues 237–249 (PQTP…SPSP) and 267–276 (AAESSPLSSA).

This is an uncharacterized protein from Bos taurus (Bovine).